The chain runs to 421 residues: WD repeat and SOCS box-containing protein 1 (421 aa).

WD repeat units follow at residues 32–71 (KCGR…QNFL), 124–165 (SRCV…LLLN), 168–208 (DHTE…NMMK), 212–251 (GHQN…MIRK), 254–293 (GHHH…ILME), and 309–346 (ANDR…DYPV). The SOCS box domain occupies 372–421 (DGSVYFWATPRQVPSLQHLCRMSIRRVMPTQEVQELPIPSKLLEFLSYRI).

As to quaternary structure, interacts with DIO2. Component of the probable ECS(WSB1) E3 ubiquitin ligase complex which contains CUL5, RNF7/RBX2, Elongin BC complex and WSB1. Component of a probable ECS-like E3 ubiquitin-protein ligase complex which contains CUL5, RBX1, Elongin BC complex and WSB1. Interacts with CUL5, RNF7, ELOB and ELOC. Binds to HIPK2 through WD40 repeats.

Its pathway is protein modification; protein ubiquitination. Its function is as follows. Probable substrate-recognition component of a SCF-like ECS (Elongin-Cullin-SOCS-box protein) E3 ubiquitin ligase complex which mediates the ubiquitination and subsequent proteasomal degradation of target proteins. Recognizes type II iodothyronine deiodinase/DIO2. Confers constitutive instability to HIPK2 through proteasomal degradation. The sequence is that of WD repeat and SOCS box-containing protein 1 (WSB1) from Homo sapiens (Human).